The primary structure comprises 438 residues: Lipoyl synthase, mitochondrial (438 aa).

The N-terminal 31 residues, 1–31 (MAASARGLRTLQSAHSSTTVPRLQLAVSRCY), are a transit peptide targeting the mitochondrion. Positions 34–57 (TTSPDPPITNSSNSSNSSNSTPTP) are enriched in low complexity. Positions 34–58 (TTSPDPPITNSSNSSNSSNSTPTPK) are disordered. Residues C148, C153, C159, C179, C183, C186, and S394 each coordinate [4Fe-4S] cluster. In terms of domain architecture, Radical SAM core spans 162–383 (GSSKSAATAT…KERALEMGFL (222 aa)).

The protein belongs to the radical SAM superfamily. Lipoyl synthase family. The cofactor is [4Fe-4S] cluster.

It localises to the mitochondrion. It catalyses the reaction [[Fe-S] cluster scaffold protein carrying a second [4Fe-4S](2+) cluster] + N(6)-octanoyl-L-lysyl-[protein] + 2 oxidized [2Fe-2S]-[ferredoxin] + 2 S-adenosyl-L-methionine + 4 H(+) = [[Fe-S] cluster scaffold protein] + N(6)-[(R)-dihydrolipoyl]-L-lysyl-[protein] + 4 Fe(3+) + 2 hydrogen sulfide + 2 5'-deoxyadenosine + 2 L-methionine + 2 reduced [2Fe-2S]-[ferredoxin]. Its pathway is protein modification; protein lipoylation via endogenous pathway; protein N(6)-(lipoyl)lysine from octanoyl-[acyl-carrier-protein]: step 2/2. Catalyzes the radical-mediated insertion of two sulfur atoms into the C-6 and C-8 positions of the octanoyl moiety bound to the lipoyl domains of lipoate-dependent enzymes, thereby converting the octanoylated domains into lipoylated derivatives. In Paracoccidioides brasiliensis (strain Pb18), this protein is Lipoyl synthase, mitochondrial.